Reading from the N-terminus, the 115-residue chain is U3-lycotoxin-Ls1a (115 aa).

The first 20 residues, 1 to 20, serve as a signal peptide directing secretion; it reads MKFVLLFGVLLVTLFSYSSA. Residues 21-44 constitute a propeptide that is removed on maturation; it reads EMLDDFDQAVEDELLSLIEKEEAR. Cystine bridges form between cysteine 48–cysteine 63, cysteine 55–cysteine 72, cysteine 62–cysteine 87, and cysteine 74–cysteine 85.

It belongs to the neurotoxin 19 (CSTX) family. 01 subfamily. In terms of tissue distribution, expressed by the venom gland.

Its subcellular location is the secreted. This Lycosa singoriensis (Wolf spider) protein is U3-lycotoxin-Ls1a.